We begin with the raw amino-acid sequence, 696 residues long: Carotenoid dioxygenase carX (696 aa).

A compositionally biased stretch (polar residues) spans 1 to 16 (MKFLQQNSFTQTSMSQ). A disordered region spans residues 1–27 (MKFLQQNSFTQTSMSQPHEDVSPPLRH). Residues H244, H298, H361, and H642 each coordinate Fe(2+).

It belongs to the carotenoid oxygenase family. Requires Fe(2+) as cofactor.

It carries out the reaction all-trans-beta-carotene + O2 = 2 all-trans-retinal. It participates in carotenoid biosynthesis. Its function is as follows. Carotenoid dioxygenase; part of the car gene cluster that mediates the biosynthesis of neurosporaxanthin, a carboxylic apocarotenoid acting as an essential protective pigments and leading to orange pigmentation. CarX mediates the cleavage of beta-carotene produced by carAR into retinal, the rhodopsin's chromophore that is involved in the regulation of the carotenoid biosynthetic pathway via a negative feedback mechanism. It can also convert the synthetic compound beta-apo-8'-carotenal but not C35-apocarotenoids such as the acidic apocarotenoid neurosporaxanthin (C35), as well as its corresponding aldehyde beta-apo-4'-carotenal. The sequence is that of Carotenoid dioxygenase carX from Gibberella fujikuroi (strain CBS 195.34 / IMI 58289 / NRRL A-6831) (Bakanae and foot rot disease fungus).